The following is a 356-amino-acid chain: UDP-3-O-acylglucosamine N-acyltransferase (356 aa).

His242 (proton acceptor) is an active-site residue.

The protein belongs to the transferase hexapeptide repeat family. LpxD subfamily. As to quaternary structure, homotrimer.

It catalyses the reaction a UDP-3-O-[(3R)-3-hydroxyacyl]-alpha-D-glucosamine + a (3R)-hydroxyacyl-[ACP] = a UDP-2-N,3-O-bis[(3R)-3-hydroxyacyl]-alpha-D-glucosamine + holo-[ACP] + H(+). It participates in bacterial outer membrane biogenesis; LPS lipid A biosynthesis. Catalyzes the N-acylation of UDP-3-O-acylglucosamine using 3-hydroxyacyl-ACP as the acyl donor. Is involved in the biosynthesis of lipid A, a phosphorylated glycolipid that anchors the lipopolysaccharide to the outer membrane of the cell. In Acinetobacter baylyi (strain ATCC 33305 / BD413 / ADP1), this protein is UDP-3-O-acylglucosamine N-acyltransferase.